The primary structure comprises 412 residues: Multifunctional CCA protein (412 aa).

ATP-binding residues include Gly8 and Arg11. Gly8 and Arg11 together coordinate CTP. Mg(2+) is bound by residues Asp21 and Asp23. Residues Arg91, Arg137, and Arg140 each contribute to the ATP site. Residues Arg91, Arg137, and Arg140 each coordinate CTP. Positions 228–329 (TGIHTMMVLA…LKVFDKADAW (102 aa)) constitute an HD domain.

This sequence belongs to the tRNA nucleotidyltransferase/poly(A) polymerase family. Bacterial CCA-adding enzyme type 1 subfamily. In terms of assembly, monomer. Can also form homodimers and oligomers. It depends on Mg(2+) as a cofactor. Ni(2+) is required as a cofactor.

The catalysed reaction is a tRNA precursor + 2 CTP + ATP = a tRNA with a 3' CCA end + 3 diphosphate. The enzyme catalyses a tRNA with a 3' CCA end + 2 CTP + ATP = a tRNA with a 3' CCACCA end + 3 diphosphate. In terms of biological role, catalyzes the addition and repair of the essential 3'-terminal CCA sequence in tRNAs without using a nucleic acid template. Adds these three nucleotides in the order of C, C, and A to the tRNA nucleotide-73, using CTP and ATP as substrates and producing inorganic pyrophosphate. tRNA 3'-terminal CCA addition is required both for tRNA processing and repair. Also involved in tRNA surveillance by mediating tandem CCA addition to generate a CCACCA at the 3' terminus of unstable tRNAs. While stable tRNAs receive only 3'-terminal CCA, unstable tRNAs are marked with CCACCA and rapidly degraded. This Aeromonas hydrophila subsp. hydrophila (strain ATCC 7966 / DSM 30187 / BCRC 13018 / CCUG 14551 / JCM 1027 / KCTC 2358 / NCIMB 9240 / NCTC 8049) protein is Multifunctional CCA protein.